Reading from the N-terminus, the 1343-residue chain is ABC multidrug transporter atrD (1343 aa).

Over residues 1-10 (MSPLETNPLS) the composition is skewed to polar residues. Residues 1–67 (MSPLETNPLS…HRPKSSSSNN (67 aa)) are disordered. Residues 20–31 (ETSTTEEQASTP) are compositionally biased toward low complexity. N-linked (GlcNAc...) asparagine glycosylation is present at asparagine 99. A run of 4 helical transmembrane segments spans residues 114 to 134 (ILIM…LPLF), 163 to 183 (YFVY…VGFI), 235 to 255 (KVGL…IAYV), and 263 to 283 (ICSS…QFII). Residues 115–403 (LIMVISTICA…VSPNAQAFTN (289 aa)) form the ABC transmembrane type-1 1 domain. An N-linked (GlcNAc...) asparagine glycan is attached at asparagine 309. A run of 2 helical transmembrane segments spans residues 339–359 (IVMG…YGLG) and 366–386 (FLVD…AILI). Residues 438 to 683 (IELRNVKHIY…GGAYRKLVEA (246 aa)) form the ABC transporter 1 domain. 473–480 (GPSGSGKS) is a binding site for ATP. N-linked (GlcNAc...) asparagine glycosylation occurs at asparagine 545. A run of 2 helical transmembrane segments spans residues 773 to 793 (MLIG…QAVL) and 820 to 840 (LMFF…GAAF). Residues 774-1063 (LIGLVFSVLA…VFSFAPDMGK (290 aa)) enclose the ABC transmembrane type-1 2 domain. A glycan (N-linked (GlcNAc...) asparagine) is linked at asparagine 872. 4 helical membrane passes run 887–907 (HLSG…TTLG), 920–942 (LALV…FYML), 1010–1030 (ALVF…LGHH), and 1037–1057 (FFVC…VFSF). An N-linked (GlcNAc...) asparagine glycan is attached at asparagine 1083. The ABC transporter 2 domain occupies 1098–1336 (IEFRNVHFRY…KGRYYELVNL (239 aa)). Position 1133–1140 (1133–1140 (GPSGCGKS)) interacts with ATP.

Belongs to the ABC transporter superfamily. ABCB family. Multidrug resistance exporter (TC 3.A.1.201) subfamily.

The protein resides in the cell membrane. With respect to regulation, fenamirol efflux transporter activity is inhibited by the cyclosporin derivative PSC 833, nigericin, reserpine and valinomycin. The effect of reserpine is transiant, while that of the cyclosporin derivative PSC 833, nigericin and valinomycin is proportional to the time of exposure. Cyclohexinmide has inhibitory effect only when applied prior to addition of the fungicide. Functionally, pleiotropic ABC efflux transporter involved in the protection of the cells against a wide range of toxic compounds. Confers resistance to the azole fenarimol via efflux transport. May also be involved in the secretion of penicillin. This is ABC multidrug transporter atrD from Emericella nidulans (strain FGSC A4 / ATCC 38163 / CBS 112.46 / NRRL 194 / M139) (Aspergillus nidulans).